A 185-amino-acid chain; its full sequence is Crossover junction endodeoxyribonuclease RuvC (185 aa).

Residues Asp-7, Glu-68, and Asp-141 contribute to the active site. Positions 7, 68, and 141 each coordinate Mg(2+).

It belongs to the RuvC family. In terms of assembly, homodimer which binds Holliday junction (HJ) DNA. The HJ becomes 2-fold symmetrical on binding to RuvC with unstacked arms; it has a different conformation from HJ DNA in complex with RuvA. In the full resolvosome a probable DNA-RuvA(4)-RuvB(12)-RuvC(2) complex forms which resolves the HJ. Mg(2+) serves as cofactor.

It is found in the cytoplasm. The enzyme catalyses Endonucleolytic cleavage at a junction such as a reciprocal single-stranded crossover between two homologous DNA duplexes (Holliday junction).. Its function is as follows. The RuvA-RuvB-RuvC complex processes Holliday junction (HJ) DNA during genetic recombination and DNA repair. Endonuclease that resolves HJ intermediates. Cleaves cruciform DNA by making single-stranded nicks across the HJ at symmetrical positions within the homologous arms, yielding a 5'-phosphate and a 3'-hydroxyl group; requires a central core of homology in the junction. The consensus cleavage sequence is 5'-(A/T)TT(C/G)-3'. Cleavage occurs on the 3'-side of the TT dinucleotide at the point of strand exchange. HJ branch migration catalyzed by RuvA-RuvB allows RuvC to scan DNA until it finds its consensus sequence, where it cleaves and resolves the cruciform DNA. In Mycolicibacterium smegmatis (strain ATCC 700084 / mc(2)155) (Mycobacterium smegmatis), this protein is Crossover junction endodeoxyribonuclease RuvC.